The sequence spans 228 residues: Large ribosomal subunit protein bL25 (228 aa).

Positions 1–10 are enriched in polar residues; the sequence is MNSLDANTRN. 2 disordered regions span residues 1 to 20 and 187 to 228; these read MNSL…VRSL and MKEP…EEKK. A compositionally biased stretch (basic and acidic residues) spans 202-228; that stretch reads EDGKEAAPAAEGDKKDDGEKKATEEKK.

This sequence belongs to the bacterial ribosomal protein bL25 family. CTC subfamily. In terms of assembly, part of the 50S ribosomal subunit; part of the 5S rRNA/L5/L18/L25 subcomplex. Contacts the 5S rRNA. Binds to the 5S rRNA independently of L5 and L18.

This is one of the proteins that binds to the 5S RNA in the ribosome where it forms part of the central protuberance. The chain is Large ribosomal subunit protein bL25 from Pelagibacter ubique (strain HTCC1062).